The following is a 420-amino-acid chain: MVGYILDDDLQEVDAEVFNCISGELNRQNSGLQLIASENFVSKAVLQAQGSIFTNKYAEGYPGKRYYCGCHFADIVENLAIERLCRLFGCKFANVQPHSGSQANQGVFAALLKPGDTVIGMSLDCGGHLTHGSAPSISGKWFNAVQYQVDRDTGLIDMDEIEKLAVEHNPSLIIAGSSSYPRVIDFKRFREIADKVGAYLLADIAHYAGLIAAGEFPSPVEYAHVITSTTHKTLRGPRGAVIMTNYEDIHKKIQSSIFPGMQGGPLMHVIAAKAVAFAEALKPEFKDYAKQIIKNSKALGEVFKERGLDLVTGGTDSHMVVLDLRSKSVTGKDAVLALEKLGIICNKNAIPFDPEKPFVTSGLRFGSAAETSRGLQESEFREIGSMVCDVIDSLKASDSVRLSVERDIIKRVKELTSNFI.

(6S)-5,6,7,8-tetrahydrofolate-binding positions include Leu123 and 127 to 129 (GHL). At Lys232 the chain carries N6-(pyridoxal phosphate)lysine.

This sequence belongs to the SHMT family. As to quaternary structure, homodimer. It depends on pyridoxal 5'-phosphate as a cofactor.

It localises to the cytoplasm. The catalysed reaction is (6R)-5,10-methylene-5,6,7,8-tetrahydrofolate + glycine + H2O = (6S)-5,6,7,8-tetrahydrofolate + L-serine. It functions in the pathway one-carbon metabolism; tetrahydrofolate interconversion. Its pathway is amino-acid biosynthesis; glycine biosynthesis; glycine from L-serine: step 1/1. Catalyzes the reversible interconversion of serine and glycine with tetrahydrofolate (THF) serving as the one-carbon carrier. This reaction serves as the major source of one-carbon groups required for the biosynthesis of purines, thymidylate, methionine, and other important biomolecules. Also exhibits THF-independent aldolase activity toward beta-hydroxyamino acids, producing glycine and aldehydes, via a retro-aldol mechanism. This is Serine hydroxymethyltransferase from Ehrlichia chaffeensis (strain ATCC CRL-10679 / Arkansas).